The chain runs to 493 residues: Tripartite motif-containing protein 5 (493 aa).

Alanine 2 carries the post-translational modification N-acetylalanine. The segment at 15–58 (CPICLELLTQPLSLDCGHSFCQACLTANHKTSMPDGERSCPVCR) adopts an RING-type zinc-finger fold. Serine 85 is modified (phosphoserine). The B box-type zinc-finger motif lies at 90–131 (QKVDHCARHGEKLLLFCREDRKVICWLCERSQEHRGHHTFLM). The Zn(2+) site is built by cysteine 95, histidine 98, cysteine 117, and histidine 123. Residues 130–240 (LMEEVAQEYQ…LISDLEHRLQ (111 aa)) are a coiled coil. The required for interaction with GABARAP and for autophagy stretch occupies residues 185–198 (FEQLRHILDWVESN). The B30.2/SPRY domain occupies 281-493 (LQVTLEVLRE…VPMTLCSPSS (213 aa)).

This sequence belongs to the TRIM/RBCC family. In terms of assembly, can form homodimers and homotrimers. In addition to lower-order dimerization, also exhibits a higher-order multimerization and both low- and high-order multimerizations are essential for its restriction activity. Interacts with BTBD1 and BTBD2. Interacts with PSMC4, PSMC5, PSMD7 and HSPA8/HSC70. Interacts (via B30.2/SPRY domain) with HSPA1A/B. Interacts with PSMC2, MAP3K7/TAK1, TAB2 and TAB3. Interacts with SQSTM1. Interacts with TRIM6 and TRIM34. Interacts with ULK1 (phosphorylated form), GABARAP, GABARAPL1, GABARAPL2, MAP1LC3A, MAP1LC3C and BECN1. Post-translationally, degraded in a proteasome-independent fashion in the absence of viral infection but in a proteasome-dependent fashion following exposure to restriction sensitive virus. In terms of processing, autoubiquitinated in a RING finger- and UBE2D2-dependent manner. Monoubiquitinated by TRIM21. Deubiquitinated by Yersinia YopJ. Ubiquitination may not lead to proteasomal degradation.

The protein resides in the cytoplasm. It is found in the nucleus. It carries out the reaction S-ubiquitinyl-[E2 ubiquitin-conjugating enzyme]-L-cysteine + [acceptor protein]-L-lysine = [E2 ubiquitin-conjugating enzyme]-L-cysteine + N(6)-ubiquitinyl-[acceptor protein]-L-lysine.. Its pathway is protein modification; protein ubiquitination. In terms of biological role, capsid-specific restriction factor that prevents infection from non-host-adapted retroviruses. Blocks viral replication early in the life cycle, after viral entry but before reverse transcription. In addition to acting as a capsid-specific restriction factor, also acts as a pattern recognition receptor that activates innate immune signaling in response to the retroviral capsid lattice. Binding to the viral capsid triggers its E3 ubiquitin ligase activity, and in concert with the heterodimeric ubiquitin conjugating enzyme complex UBE2V1-UBE2N (also known as UBC13-UEV1A complex) generates 'Lys-63'-linked polyubiquitin chains, which in turn are catalysts in the autophosphorylation of the MAP3K7/TAK1 complex (includes TAK1, TAB2, and TAB3). Activation of the MAP3K7/TAK1 complex by autophosphorylation results in the induction and expression of NF-kappa-B and MAPK-responsive inflammatory genes, thereby leading to an innate immune response in the infected cell. Plays a role in regulating autophagy through activation of autophagy regulator BECN1 by causing its dissociation from its inhibitors BCL2 and TAB2. The polypeptide is Tripartite motif-containing protein 5 (TRIM5) (Hylobates lar (Lar gibbon)).